The primary structure comprises 661 residues: Immunoglobulin-like domain-containing receptor 2 (661 aa).

Residues 1 to 35 (MPAFPTLDLDGKLGKMDRVVLGWTAVFWLTAMVEG) form the signal peptide. Positions 36 to 177 (LQVTVPDKKK…LEGKNEDSVE (142 aa)) constitute an Ig-like V-type domain. Residues 36–201 (LQVTVPDKKK…PSFAVEIMPE (166 aa)) are Lumenal-facing. C57 and C160 are oxidised to a cystine. A helical transmembrane segment spans residues 202–222 (WVFVGLVILGIFLFFVLVGIC). At 223 to 661 (WCQCCPHSCC…DFPTRMSLVV (439 aa)) the chain is on the cytoplasmic side. Disordered regions lie at residues 288 to 310 (LMDKPHPPPLAPSDSTGGSHSVR), 410 to 429 (EDRESFRHSQQRSKSEMLSR), and 453 to 661 (QRSR…SLVV). 2 stretches are compositionally biased toward basic and acidic residues: residues 410–428 (EDRESFRHSQQRSKSEMLS) and 463–478 (HEARAGSRFERSESRA). A Phosphoserine modification is found at S487. The segment covering 491–506 (YYGRGRSREPPGDGER) has biased composition (basic and acidic residues). R559 carries the post-translational modification Omega-N-methylarginine. S594 bears the Phosphoserine mark. Acidic residues predominate over residues 595 to 607 (EGEDEDDAADEDA). Positions 628–639 (RGRDLSFHSNSE) are enriched in basic and acidic residues.

Belongs to the immunoglobulin superfamily. LISCH7 family. As to quaternary structure, interacts with MARVELD2 and OCLN. Interacts with P4HB and HSPA5; the interaction with HSPA5 stabilizes ILDR2 expression. Interacts (via C-terminus) with TRA2A, TRA2B and SRSF1. As to expression, expressed in epithelial tissues, mainly in liver, kidney and colon.

The protein localises to the endoplasmic reticulum membrane. It localises to the cell junction. The protein resides in the tight junction. Its subcellular location is the nucleus. May be involved in ER stress pathways with effects on lipid homeostasis and insulin secretion. With ILDR1 and LSR, involved in the maintain of the epithelial barrier function through the recruitment of MARVELD2/tricellulin to tricellular tight junctions. Also functions as a B7-like protein family member expressed on immune cells and inflamed tissue and with T-cell inhibitory activity. In the inner ear, may regulate alternative pre-mRNA splicing via binding to TRA2A, TRA2B and SRSF1. The protein is Immunoglobulin-like domain-containing receptor 2 of Mus musculus (Mouse).